A 651-amino-acid chain; its full sequence is MADSAELKQMVMSLRVSELQVLLGYAGRNKHGRKHELLTKALHLLKAGCSPAVQMKIKELYRRRFPQKIMTPADLSIPNVHSSPMPATLSPSTIPQLTYDGHPASSPLLPVSLLGPKHELELPHLTSALHPVHPDIKLQKLPFYDLLDELIKPTSLASDNSQRFRETCFAFALTPQQVQQISSSMDISGTKCDFTVQVQLRFCLSETSCPQEDHFPPNLCVKVNTKPCSLPGYLPPTKNGVEPKRPSRPINITSLVRLSTTVPNTIVVSWTAEIGRNYSMAVYLVKQLSSTVLLQRLRAKGIRNPDHSRALIKEKLTADPDSEIATTSLRVSLLCPLGKMRLTIPCRALTCSHLQCFDATLYIQMNEKKPTWVCPVCDKKAPYEHLIIDGLFMEILKYCTDCDEIQFKEDGTWAPMRSKKEVQEVSASYNGVDGCLSSTLEHQVASHHQSSNKNKKVEVIDLTIDSSSDEEEEEPSAKRTCPSLSPTSPLNNKGILSLPHQASPVSRTPSLPAVDTSYINTSLIQDYRHPFHMTPMPYDLQGLDFFPFLSGDNQHYNTSLLAAAAAAVSDDQDLLHSSRFFPYTSSQMFLDQLSAGGSTSLPTTNGSSSGSNSSLVSSNSLRESHSHTVTNRSSTDTASIFGIIPDIISLD.

A2 bears the N-acetylalanine mark. A required for interaction with MSX1 region spans residues 2–200 (ADSAELKQMV…KCDFTVQVQL (199 aa)). The 35-residue stretch at 11 to 45 (VMSLRVSELQVLLGYAGRNKHGRKHELLTKALHLL) folds into the SAP domain. The short motif at 19–23 (LQVLL) is the LXXLL motif element. Residues K40 and K46 each participate in a glycyl lysine isopeptide (Lys-Gly) (interchain with G-Cter in SUMO2) cross-link. The Nuclear localization signal motif lies at 56-64 (KIKELYRRR). Residues 124 to 288 (HLTSALHPVH…SMAVYLVKQL (165 aa)) enclose the PINIT domain. Glycyl lysine isopeptide (Lys-Gly) (interchain with G-Cter in SUMO2) cross-links involve residues K137 and K238. The segment at 320 to 405 (PDSEIATTSL…LKYCTDCDEI (86 aa)) adopts an SP-RING-type zinc-finger fold. Zn(2+)-binding residues include C351, H353, C374, and C377. Residues 368-380 (KKPTWVCPVCDKK) carry the Nuclear localization signal motif. A Glycyl lysine isopeptide (Lys-Gly) (interchain with G-Cter in SUMO2) cross-link involves residue K453. The tract at residues 462–473 (LTIDSSSDEEEE) is SUMO1-binding. The tract at residues 465 to 511 (DSSSDEEEEEPSAKRTCPSLSPTSPLNNKGILSLPHQASPVSRTPSL) is disordered. Phosphoserine occurs at positions 467, 468, 483, and 485. Residues 482 to 491 (PSLSPTSPLN) show a composition bias toward polar residues. Residue T487 is modified to Phosphothreonine. Phosphoserine is present on S488. Residue K493 forms a Glycyl lysine isopeptide (Lys-Gly) (interchain with G-Cter in SUMO2) linkage. Phosphoserine occurs at positions 503, 510, and 522. Tandem repeats lie at residues 520-523 (NTSL) and 557-560 (NTSL). The interval 520 to 615 (NTSLIQDYRH…GSSSGSNSSL (96 aa)) is 4 X 4 AA repeats of N-T-S-L. Residues 598 to 601 (STSL) form a 3; approximate repeat. The segment covering 599 to 621 (TSLPTTNGSSSGSNSSLVSSNSL) has biased composition (low complexity). The segment at 599-632 (TSLPTTNGSSSGSNSSLVSSNSLRESHSHTVTNR) is disordered. The 4; approximate repeat unit spans residues 612-615 (NSSL).

Belongs to the PIAS family. As to quaternary structure, interacts with NCOA2 and AR. Interacts with NR2C1; the interaction promotes its sumoylation. Interacts with DDX21, CSRP2, AXIN1, JUN, UBE2I, SUMO1, SATB2, PLAG1, TP53 and STAT1 (dimer), following IFNA1-stimulation. Interacts with SP3 (preferentially when SUMO-modified). Interacts with KLF8; the interaction results in SUMO ligation and repression of KLF8 transcriptional activity and of its cell cycle progression into G(1) phase. Interacts with CHUK/IKKA; this interaction induces PIAS1 phosphorylation. Interacts with PTK2/FAK1; the interaction promotes its sumoylation. Interacts with DDX5. Interacts with PML. Interacts with MTA1. Interacts with SUMO1P1/SUMO5. Interacts with PRDM1/Blimp-1. Interacts (via N-terminus) with MSX1 (via C-terminus); the interaction is required for the localization of both proteins to the nuclear periphery and specific binding of MSX1 to the core enhancer region in target gene promoters. (Microbial infection) Interacts with ebolavirus VP35; this interaction mediates the sumoylation of IRF7 and contributes to the viral inhibition of IFN-type I production. Post-translationally, sumoylated. In terms of tissue distribution, expressed in numerous tissues with highest level in testis.

The protein resides in the nucleus. It is found in the nucleus speckle. The protein localises to the PML body. Its subcellular location is the cytoplasm. It localises to the cytoskeleton. It functions in the pathway protein modification; protein sumoylation. Functions as an E3-type small ubiquitin-like modifier (SUMO) ligase, stabilizing the interaction between UBE2I and the substrate, and as a SUMO-tethering factor. Catalyzes sumoylation of various proteins, such as CEBPB, MRE11, MTA1, PTK2 and PML. Plays a crucial role as a transcriptional coregulation in various cellular pathways, including the STAT pathway, the p53 pathway and the steroid hormone signaling pathway. In vitro, binds A/T-rich DNA. The effects of this transcriptional coregulation, transactivation or silencing, may vary depending upon the biological context. Mediates sumoylation of MRE11, stabilizing MRE11 on chromatin during end resection. Sumoylates PML (at 'Lys-65' and 'Lys-160') and PML-RAR and promotes their ubiquitin-mediated degradation. PIAS1-mediated sumoylation of PML promotes its interaction with CSNK2A1/CK2 which in turn promotes PML phosphorylation and degradation. Enhances the sumoylation of MTA1 and may participate in its paralog-selective sumoylation. Plays a dynamic role in adipogenesis by promoting the SUMOylation and degradation of CEBPB. Mediates the nuclear mobility and localization of MSX1 to the nuclear periphery, whereby MSX1 is brought into the proximity of target myoblast differentiation factor genes. Also required for the binding of MSX1 to the core enhancer region in target gene promoter regions, independent of its sumoylation activity. Capable of binding to the core enhancer region TAAT box in the MYOD1 gene promoter. Its function is as follows. (Microbial infection) Restricts Epstein-Barr virus (EBV) lytic replication by acting as an inhibitor for transcription factors involved in lytic gene expression. The virus can use apoptotic caspases to antagonize PIAS1-mediated restriction and express its lytic genes. This is E3 SUMO-protein ligase PIAS1 (PIAS1) from Homo sapiens (Human).